The chain runs to 285 residues: 2-dehydro-3-deoxyphosphooctonate aldolase (285 aa).

The protein belongs to the KdsA family.

Its subcellular location is the cytoplasm. It carries out the reaction D-arabinose 5-phosphate + phosphoenolpyruvate + H2O = 3-deoxy-alpha-D-manno-2-octulosonate-8-phosphate + phosphate. The protein operates within carbohydrate biosynthesis; 3-deoxy-D-manno-octulosonate biosynthesis; 3-deoxy-D-manno-octulosonate from D-ribulose 5-phosphate: step 2/3. It functions in the pathway bacterial outer membrane biogenesis; lipopolysaccharide biosynthesis. The protein is 2-dehydro-3-deoxyphosphooctonate aldolase of Bordetella bronchiseptica (strain ATCC BAA-588 / NCTC 13252 / RB50) (Alcaligenes bronchisepticus).